We begin with the raw amino-acid sequence, 108 residues long: TYRO protein tyrosine kinase-binding protein (108 aa).

An N-terminal signal peptide occupies residues 1 to 25; sequence MGRLGPSNGLLPLLLAVGGFSLVQA. At 26 to 36 the chain is on the extracellular side; sequence QRECSCSAVSP. A helical membrane pass occupies residues 37-57; it reads GILAGIVLGDLVLTLLIALAV. Asp-46 provides a ligand contact to Ca(2+). Residues 58–108 lie on the Cytoplasmic side of the membrane; the sequence is YSLGRLVPRTRGAVDVTRKQHIAETESAYQELQGQRSDVYSDLNTQRQYYK. Residues 75-103 enclose the ITAM domain; the sequence is RKQHIAETESAYQELQGQRSDVYSDLNTQ. 2 positions are modified to phosphotyrosine: Tyr-86 and Tyr-97.

Belongs to the TYROBP family. As to quaternary structure, homodimer; disulfide-linked. Homotrimer; disulfide-linked. Homotetramer; disulfide-linked. Homotrimers and homotetramers form when low levels of partner receptors are available and is competitive with assembly with interacting receptors. They may represent alternative oligomerization states or may be intermediates in the receptor assembly process. Binding of a metal cation aids in homooligomerization through coordination of the metal ion by the subunits of the oligomer. Interacts with TREM1. Interacts with TREM2. Interacts with CLECSF5. Interacts with CD300LB and CD300C2. Interacts with CD300E. Interacts (via ITAM domain) with SYK (via SH2 domains); activates SYK mediating neutrophils and macrophages integrin-mediated activation. Interacts with KLRC2. Interacts with CD300H. Interacts with KLRD1. Interacts with SIGLEC1. Following ligand binding by associated receptors, tyrosine phosphorylated in the ITAM domain which leads to activation of additional tyrosine kinases and subsequent cell activation. As to expression, highly expressed in spleen, liver and thymus. Weakly expressed in lymph nodes. Expressed in peripheral blood leukocytes, granulocytes, macrophages, and monocytes. LPS does not increase expression in granulocytes.

It localises to the cell membrane. Adapter protein which non-covalently associates with activating receptors found on the surface of a variety of immune cells to mediate signaling and cell activation following ligand binding by the receptors. TYROBP is tyrosine-phosphorylated in the ITAM domain following ligand binding by the associated receptors which leads to activation of additional tyrosine kinases and subsequent cell activation. Also has an inhibitory role in some cells. Non-covalently associates with activating receptors of the CD300 family to mediate cell activation. Also mediates cell activation through association with activating receptors of the CD200R family. Required for neutrophil activation mediated by integrin. Required for the activation of myeloid cells mediated by the CLEC5A/MDL1 receptor. Associates with natural killer (NK) cell receptors such as the KLRD1/KLRC2 heterodimer to mediate NK cell activation. Associates with TREM1 to mediate activation of neutrophils and monocytes. Associates with TREM2 on monocyte-derived dendritic cells to mediate up-regulation of chemokine receptor CCR7 and dendritic cell maturation and survival. Association with TREM2 mediates cytokine-induced formation of multinucleated giant cells which are formed by the fusion of macrophages. Stabilizes the TREM2 C-terminal fragment (TREM2-CTF) produced by TREM2 ectodomain shedding which suppresses the release of pro-inflammatory cytokines. In microglia, required with TREM2 for phagocytosis of apoptotic neurons. Required with ITGAM/CD11B in microglia to control production of microglial superoxide ions which promote the neuronal apoptosis that occurs during brain development. Promotes pro-inflammatory responses in microglia following nerve injury which accelerates degeneration of injured neurons. Positively regulates the expression of the IRAK3/IRAK-M kinase and IL10 production by liver dendritic cells and inhibits their T cell allosimulatory ability. Negatively regulates B cell proliferation. Required for CSF1-mediated osteoclast cytoskeletal organization. Positively regulates multinucleation during osteoclast development. This Sus scrofa (Pig) protein is TYRO protein tyrosine kinase-binding protein.